Reading from the N-terminus, the 388-residue chain is GTPase Obg (388 aa).

In terms of domain architecture, Obg spans 4–162; it reads SNFVDYVKIY…MTVILELKLL (159 aa). Residues 18 to 45 form a disordered region; that stretch reads KGGRGSTHMRREKYTPNGGPDGGDGGRG. The segment covering 36–45 has biased composition (gly residues); sequence GPDGGDGGRG. The OBG-type G domain occupies 163-329; the sequence is ADVGLVGFPN…LKDILWTELN (167 aa). GTP-binding positions include 169–176, 194–198, 216–219, 283–286, and 310–312; these read GFPNAGKS, FTTLE, DIPG, TKSD, and SSV. S176 and T196 together coordinate Mg(2+). Positions 352–388 are disordered; sequence LKDMGEDEELDYEYEDDGDGDEDDLDYEYEEEDWEDK. A compositionally biased stretch (acidic residues) spans 356–388; sequence GEDEELDYEYEDDGDGDEDDLDYEYEEEDWEDK.

Belongs to the TRAFAC class OBG-HflX-like GTPase superfamily. OBG GTPase family. In terms of assembly, monomer. Mg(2+) serves as cofactor.

It localises to the cytoplasm. Functionally, an essential GTPase which binds GTP, GDP and possibly (p)ppGpp with moderate affinity, with high nucleotide exchange rates and a fairly low GTP hydrolysis rate. Plays a role in control of the cell cycle, stress response, ribosome biogenesis and in those bacteria that undergo differentiation, in morphogenesis control. This is GTPase Obg from Bacteroides fragilis (strain ATCC 25285 / DSM 2151 / CCUG 4856 / JCM 11019 / LMG 10263 / NCTC 9343 / Onslow / VPI 2553 / EN-2).